We begin with the raw amino-acid sequence, 329 residues long: DNA-directed RNA polymerase subunit alpha (329 aa).

Residues 1–235 form an alpha N-terminal domain (alpha-NTD) region; it reads MQGSVIEFLK…EQLDAFVDLR (235 aa). Residues 249 to 329 are alpha C-terminal domain (alpha-CTD); the sequence is FDPILLRPVD…NWPPASIAED (81 aa).

The protein belongs to the RNA polymerase alpha chain family. As to quaternary structure, homodimer. The RNAP catalytic core consists of 2 alpha, 1 beta, 1 beta' and 1 omega subunit. When a sigma factor is associated with the core the holoenzyme is formed, which can initiate transcription.

The enzyme catalyses RNA(n) + a ribonucleoside 5'-triphosphate = RNA(n+1) + diphosphate. Functionally, DNA-dependent RNA polymerase catalyzes the transcription of DNA into RNA using the four ribonucleoside triphosphates as substrates. The chain is DNA-directed RNA polymerase subunit alpha from Haemophilus ducreyi (strain 35000HP / ATCC 700724).